Reading from the N-terminus, the 420-residue chain is Gamma-glutamyl phosphate reductase (420 aa).

The protein belongs to the gamma-glutamyl phosphate reductase family.

The protein localises to the cytoplasm. It carries out the reaction L-glutamate 5-semialdehyde + phosphate + NADP(+) = L-glutamyl 5-phosphate + NADPH + H(+). Its pathway is amino-acid biosynthesis; L-proline biosynthesis; L-glutamate 5-semialdehyde from L-glutamate: step 2/2. In terms of biological role, catalyzes the NADPH-dependent reduction of L-glutamate 5-phosphate into L-glutamate 5-semialdehyde and phosphate. The product spontaneously undergoes cyclization to form 1-pyrroline-5-carboxylate. The sequence is that of Gamma-glutamyl phosphate reductase from Shewanella denitrificans (strain OS217 / ATCC BAA-1090 / DSM 15013).